We begin with the raw amino-acid sequence, 784 residues long: PWWP domain-containing protein 2A (784 aa).

Disordered regions lie at residues 1 to 32 (MAAV…LGRL), 244 to 272 (KPVE…PEDV), 463 to 567 (AKEK…EMQD), and 605 to 654 (SSSA…SSKE). Residues 244–266 (KPVESIQEESKSFHEEPLVKSEE) are compositionally biased toward basic and acidic residues. Positions 536–556 (TRYSATRSAGETPSEIQSPSN) are enriched in polar residues. The segment covering 605 to 614 (SSSASVCSSD) has biased composition (low complexity). The region spanning 684 to 744 (VGDIVWAKIY…LSQLTPFLEN (61 aa)) is the PWWP domain.

Its subcellular location is the nucleus. H2A.Z-specific chromatin binding protein which plays an important role in the neural crest cell differentiation and/or migration during early development and is essential for the development of the head and eye. Acts as an adapter between distinct nucleosome components (H3K36me3 or H2A.Z) and chromatin-modifying complexes, contributing to the regulation of the levels of histone acetylation at actively transcribed genes. The sequence is that of PWWP domain-containing protein 2A (pwwp2a) from Xenopus tropicalis (Western clawed frog).